Reading from the N-terminus, the 373-residue chain is Queuine tRNA-ribosyltransferase (373 aa).

The active-site Proton acceptor is Asp93. Substrate contacts are provided by residues 93–97, Asp147, Gln191, and Gly218; that span reads DSGGF. Residues 249–255 form an RNA binding region; sequence GVGAPRD. Catalysis depends on Asp268, which acts as the Nucleophile. The interval 273–277 is RNA binding; important for wobble base 34 recognition; sequence TRNAR. Positions 306, 308, 311, and 337 each coordinate Zn(2+).

This sequence belongs to the queuine tRNA-ribosyltransferase family. As to quaternary structure, homodimer. Within each dimer, one monomer is responsible for RNA recognition and catalysis, while the other monomer binds to the replacement base PreQ1. Zn(2+) serves as cofactor.

The catalysed reaction is 7-aminomethyl-7-carbaguanine + guanosine(34) in tRNA = 7-aminomethyl-7-carbaguanosine(34) in tRNA + guanine. The protein operates within tRNA modification; tRNA-queuosine biosynthesis. In terms of biological role, catalyzes the base-exchange of a guanine (G) residue with the queuine precursor 7-aminomethyl-7-deazaguanine (PreQ1) at position 34 (anticodon wobble position) in tRNAs with GU(N) anticodons (tRNA-Asp, -Asn, -His and -Tyr). Catalysis occurs through a double-displacement mechanism. The nucleophile active site attacks the C1' of nucleotide 34 to detach the guanine base from the RNA, forming a covalent enzyme-RNA intermediate. The proton acceptor active site deprotonates the incoming PreQ1, allowing a nucleophilic attack on the C1' of the ribose to form the product. After dissociation, two additional enzymatic reactions on the tRNA convert PreQ1 to queuine (Q), resulting in the hypermodified nucleoside queuosine (7-(((4,5-cis-dihydroxy-2-cyclopenten-1-yl)amino)methyl)-7-deazaguanosine). In Solidesulfovibrio magneticus (strain ATCC 700980 / DSM 13731 / RS-1) (Desulfovibrio magneticus), this protein is Queuine tRNA-ribosyltransferase.